The primary structure comprises 337 residues: Nucleoid-associated protein HS_0228 (337 aa).

Belongs to the YejK family.

The protein resides in the cytoplasm. It localises to the nucleoid. This is Nucleoid-associated protein HS_0228 from Histophilus somni (strain 129Pt) (Haemophilus somnus).